The chain runs to 82 residues: MRLSYVSLTLAIIFVMAIVHAPETEAKAYPEADAVGEASAVGEADAVGVADPGVGSLLAKAALKILKIVAPAAAEVIANKIG.

Residues 1 to 26 (MRLSYVSLTLAIIFVMAIVHAPETEA) form the signal peptide. A propeptide spanning residues 27-52 (KAYPEADAVGEASAVGEADAVGVADP) is cleaved from the precursor. An Isoleucine amide modification is found at I81.

This sequence belongs to the formicidae venom precursor-01 superfamily. In terms of tissue distribution, expressed by the venom gland.

It is found in the secreted. Functionally, induces paralysis 5 minutes after injection into blowflies (L.caesar). In most cases is not lethal 24 hours after injection, but paralysis is irreversible. May have antimicrobial properties, like most ant linear peptides. In Manica rubida (European giant red ant), this protein is U10-myrmicitoxin-Mri1c.